We begin with the raw amino-acid sequence, 21 residues long: Major outer membrane protein P44 (21 aa).

Monomer.

It is found in the cell outer membrane. This chain is Major outer membrane protein P44, found in Mannheimia haemolytica (Pasteurella haemolytica).